The chain runs to 159 residues: Vesicle transport protein SFT2B (159 aa).

Position 1 is an N-acetylmethionine (Met-1). Residues Met-1 to Gly-36 are Cytoplasmic-facing. Ser-9 carries the phosphoserine modification. Residues Phe-37–Val-57 form a helical membrane-spanning segment. At Pro-58–Gly-63 the chain is on the lumenal side. Residues Leu-64 to Met-84 form a helical membrane-spanning segment. The Cytoplasmic portion of the chain corresponds to Gly-85–Arg-98. Residues Leu-99 to Trp-119 traverse the membrane as a helical segment. The Lumenal portion of the chain corresponds to Asn-120–Gly-122. A helical transmembrane segment spans residues Leu-123 to Ile-143. The Cytoplasmic segment spans residues Pro-144–Ala-159.

Belongs to the SFT2 family.

The protein resides in the membrane. Its function is as follows. May be involved in fusion of retrograde transport vesicles derived from an endocytic compartment with the Golgi complex. The protein is Vesicle transport protein SFT2B of Mus musculus (Mouse).